The sequence spans 172 residues: 3-hydroxydecanoyl-[acyl-carrier-protein] dehydratase (172 aa).

H71 is a catalytic residue.

Belongs to the thioester dehydratase family. FabA subfamily. As to quaternary structure, homodimer.

The protein localises to the cytoplasm. It carries out the reaction a (3R)-hydroxyacyl-[ACP] = a (2E)-enoyl-[ACP] + H2O. The enzyme catalyses (3R)-hydroxydecanoyl-[ACP] = (2E)-decenoyl-[ACP] + H2O. It catalyses the reaction (2E)-decenoyl-[ACP] = (3Z)-decenoyl-[ACP]. It functions in the pathway lipid metabolism; fatty acid biosynthesis. In terms of biological role, necessary for the introduction of cis unsaturation into fatty acids. Catalyzes the dehydration of (3R)-3-hydroxydecanoyl-ACP to E-(2)-decenoyl-ACP and then its isomerization to Z-(3)-decenoyl-ACP. Can catalyze the dehydratase reaction for beta-hydroxyacyl-ACPs with saturated chain lengths up to 16:0, being most active on intermediate chain length. The protein is 3-hydroxydecanoyl-[acyl-carrier-protein] dehydratase of Brucella ovis (strain ATCC 25840 / 63/290 / NCTC 10512).